A 409-amino-acid chain; its full sequence is Probable peptidoglycan glycosyltransferase FtsW (409 aa).

Transmembrane regions (helical) follow at residues 42–62, 72–92, 108–128, 135–155, 178–198, 213–233, 303–323, 337–357, and 368–388; these read LFTLAMALLAFGFVMVTSASL, PFHFAIRHGIYILISLAVMLA, LLLLGLIMLLMVLVVGYEVNG, VGPITFQAAEVAKLFFCIYMA, LLFIAAVLLLMQPDFGTVVVL, LWQFFAVFITCVLALILLIIV, FLGVLAVIATVLMLVWRALII, YLAYGIGIWFSIQAFVNIGVA, and LPLVSYGGNSLIISALAVGLL.

This sequence belongs to the SEDS family. FtsW subfamily.

It localises to the cell inner membrane. The enzyme catalyses [GlcNAc-(1-&gt;4)-Mur2Ac(oyl-L-Ala-gamma-D-Glu-L-Lys-D-Ala-D-Ala)](n)-di-trans,octa-cis-undecaprenyl diphosphate + beta-D-GlcNAc-(1-&gt;4)-Mur2Ac(oyl-L-Ala-gamma-D-Glu-L-Lys-D-Ala-D-Ala)-di-trans,octa-cis-undecaprenyl diphosphate = [GlcNAc-(1-&gt;4)-Mur2Ac(oyl-L-Ala-gamma-D-Glu-L-Lys-D-Ala-D-Ala)](n+1)-di-trans,octa-cis-undecaprenyl diphosphate + di-trans,octa-cis-undecaprenyl diphosphate + H(+). Its pathway is cell wall biogenesis; peptidoglycan biosynthesis. In terms of biological role, peptidoglycan polymerase that is essential for cell division. This is Probable peptidoglycan glycosyltransferase FtsW from Idiomarina loihiensis (strain ATCC BAA-735 / DSM 15497 / L2-TR).